A 197-amino-acid chain; its full sequence is Probable GTP-binding protein EngB (197 aa).

An EngB-type G domain is found at 26–197; it reads DLPEIALAGR…TSWDAILESL (172 aa). Residues 34–41, 61–65, 79–82, 146–149, and 178–180 each bind GTP; these read GRSNVGKS, GKTQS, DVPG, TKAD, and FSS. Serine 41 and threonine 63 together coordinate Mg(2+).

The protein belongs to the TRAFAC class TrmE-Era-EngA-EngB-Septin-like GTPase superfamily. EngB GTPase family. Mg(2+) is required as a cofactor.

Necessary for normal cell division and for the maintenance of normal septation. The sequence is that of Probable GTP-binding protein EngB from Streptococcus mutans serotype c (strain ATCC 700610 / UA159).